A 613-amino-acid polypeptide reads, in one-letter code: RNA polymerase sigma factor RpoD (613 aa).

The tract at residues 2 to 80 (EQNPQSQLKL…TADEDAAEAA (79 aa)) is sigma-70 factor domain-1. The tract at residues 176-213 (PTATHVGSELSQEDLDDDEDEDEEDGDDDSADDDNSID) is disordered. Acidic residues predominate over residues 186–212 (SQEDLDDDEDEDEEDGDDDSADDDNSI). The interval 379–449 (MVEANLRLVI…TRSIADQART (71 aa)) is sigma-70 factor domain-2. An Interaction with polymerase core subunit RpoC motif is present at residues 403 to 406 (DLIQ). Residues 458–534 (ETINKLNRIS…DTTLELPLDS (77 aa)) are sigma-70 factor domain-3. The tract at residues 547 to 600 (VLAGLTAREAKVLRMRFGIDMNTDYTLEEVGKQFDVTRERIRQIEAKALRKLRH) is sigma-70 factor domain-4. Residues 573–592 (LEEVGKQFDVTRERIRQIEA) constitute a DNA-binding region (H-T-H motif). The interaction with anti-sigma factors stretch occupies residues 584-599 (RERIRQIEAKALRKLR).

Belongs to the sigma-70 factor family. RpoD/SigA subfamily. In terms of assembly, interacts transiently with the RNA polymerase catalytic core formed by RpoA, RpoB, RpoC and RpoZ (2 alpha, 1 beta, 1 beta' and 1 omega subunit) to form the RNA polymerase holoenzyme that can initiate transcription. Identified in a complex containing RpoD, the RNA polymerase subunits RpoA, RpoB and RpoZ, CRP and DNA. Interacts with Rsd; this prevents interaction with the RNA polymerase catalytic core and with promoter DNA, and as a consequence, promotes transcription from promoters that require alternative sigma factors. Interacts with phage T4 AsiA; this interferes with binding to DNA and to the RNA polymerase. (Microbial infection) Interacts with Escherichia phage lambda antitermination protein Q.

It localises to the cytoplasm. In terms of biological role, sigma factors are initiation factors that promote the attachment of RNA polymerase to specific initiation sites and are then released. This sigma factor is the primary sigma factor during exponential growth. Preferentially transcribes genes associated with fast growth, such as ribosomal operons, other protein-synthesis related genes, rRNA- and tRNA-encoding genes and prfB. The sequence is that of RNA polymerase sigma factor RpoD from Escherichia coli (strain K12).